We begin with the raw amino-acid sequence, 253 residues long: Decarboxylase DEC1 (253 aa).

The active-site Schiff-base intermediate with acetoacetate is the lysine 121.

This sequence belongs to the ADC family.

It participates in mycotoxin biosynthesis. In terms of biological role, decarboxylase; part of the Tox1B locus, one of the 2 loci that mediate the biosynthesis of T-toxin, a family of linear polyketides 37 to 45 carbons in length, of which the major component is 41 carbons, and which leads to high virulence to maize. One of the PKSs (PKS1 or PKS2) could synthesize a precursor, used subsequently by the other PKS as starter unit, to add additional carbons. Variability in the length of the final carbon backbone C35-47 could be achieved by varying the number of condensation cycles, or use of different starter or extender units or might be due to decarboxylation of the penultimate product, catalyzed by DEC1. Additional proteins are required for the biosynthesis of T-toxin, including oxidoreductases RED1, RED2, RED3, LAM1 and OXI1, as well as esterase TOX9. The chain is Decarboxylase DEC1 from Cochliobolus heterostrophus (strain C4 / ATCC 48331 / race T) (Southern corn leaf blight fungus).